The primary structure comprises 1179 residues: MAACGRVRRMFRLSAALHLLLLFAAGAEKLPGQGVHSQGQGPGANFVSFVGQAGGGGPAGQQLPQLPQSSQLQQQQQQQQQQQQPQPPQPPFPAGGPPARRGGAGAGGGWKLAEEESCREDVTRVCPKHTWSNNLAVLECLQDVREPENEISSDCNHLLWNYKLNLTTDPKFESVAREVCKSTITEIKECADEPVGKGYMVSCLVDHRGNITEYQCHQYITKMTAIIFSDYRLICGFMDDCKNDINILKCGSIRLGEKDAHSQGEVVSCLEKGLVKEAEEREPKIQVSELCKKAILRVAELSSDDFHLDRHLYFACRDDRERFCENTQAGEGRVYKCLFNHKFEESMSEKCREALTTRQKLIAQDYKVSYSLAKSCKSDLKKYRCNVENLPRSREARLSYLLMCLESAVHRGRQVSSECQGEMLDYRRMLMEDFSLSPEIILSCRGEIEHHCSGLHRKGRTLHCLMKVVRGEKGNLGMNCQQALQTLIQETDPGADYRIDRALNEACESVIQTACKHIRSGDPMILSCLMEHLYTEKMVEDCEHRLLELQYFISRDWKLDPVLYRKCQGDASRLCHTHGWNETSEFMPQGAVFSCLYRHAYRTEEQGRRLSRECRAEVQRILHQRAMDVKLDPALQDKCLIDLGKWCSEKTETGQELECLQDHLDDLVVECRDIVGNLTELESEDIQIEALLMRACEPIIQNFCHDVADNQIDSGDLMECLIQNKHQKDMNEKCAIGVTHFQLVQMKDFRFSYKFKMACKEDVLKLCPNIKKKVDVVICLSTTVRNDTLQEAKEHRVSLKCRRQLRVEELEMTEDIRLEPDLYEACKSDIKNFCSAVQYGNAQIIECLKENKKQLSTRCHQKVFKLQETEMMDPELDYTLMRVCKQMIKRFCPEADSKTMLQCLKQNKNSELMDPKCKQMITKRQITQNTDYRLNPMLRKACKADIPKFCHGILTKAKDDSELEGQVISCLKLRYADQRLSSDCEDQIRIIIQESALDYRLDPQLQLHCSDEISSLCAEEAAAQEQTGQVEECLKVNLLKIKTELCKKEVLNMLKESKADIFVDPVLHTACALDIKHHCAAITPGRGRQMSCLMEALEDKRVRLQPECKKRLNDRIEMWSYAAKVAPADGFSDLAMQVMTSPSKNYILSVISGSICILFLIGLMCGRITKRVTRELKDR.

An N-terminal signal peptide occupies residues 1-29 (MAACGRVRRMFRLSAALHLLLLFAAGAEK). Topologically, residues 30 to 1145 (LPGQGVHSQG…MQVMTSPSKN (1116 aa)) are extracellular. The interval 32 to 112 (GQGVHSQGQG…GAGAGGGWKL (81 aa)) is disordered. The span at 60–84 (GQQLPQLPQSSQLQQQQQQQQQQQQ) shows a compositional bias: low complexity. Residues 85 to 96 (PQPPQPPFPAGG) show a composition bias toward pro residues. Cys-rich GLG1 repeat units lie at residues 116-149 (ESCREDVTRVCPKHTWSNNLAVLECLQDVREPEN), 150-212 (EISS…GNIT), 215-278 (QCHQ…VKEA), 286-346 (QVSE…FEES), 347-413 (MSEK…HRGR), 414-473 (QVSS…RGEK), 475-537 (NLGM…YTEK), 538-604 (MVED…YRTE), 609-668 (RLSR…DDLV), 670-728 (ECRD…KHQK), 729-788 (DMNE…RNDT), 796-856 (RVSL…KQLS), 858-911 (RCHQ…KNSE), 912-979 (LMDP…ADQR), 980-1035 (LSSD…ECLK), and 1041-1101 (IKTE…EDKR). Residues asparagine 165 and asparagine 210 are each glycosylated (N-linked (GlcNAc...) asparagine). Residue asparagine 581 is glycosylated (N-linked (GlcNAc...) asparagine). Residues asparagine 677 and asparagine 786 are each glycosylated (N-linked (GlcNAc...) asparagine). At serine 961 the chain carries Phosphoserine. Residues 1146 to 1166 (YILSVISGSICILFLIGLMCG) traverse the membrane as a helical segment. Topologically, residues 1167–1179 (RITKRVTRELKDR) are cytoplasmic.

In terms of processing, fucosylation is essential for binding to E-selectin. Post-translationally, N-glycosylated. Contains sialic acid residues. Widely expressed. Highest levels in pancreas, skeletal muscle, placenta, heart, testis and ovary. Also found in the kidney, liver, lung and brain.

The protein resides in the golgi apparatus membrane. The protein localises to the golgi outpost. It localises to the cytoplasm. It is found in the cytoskeleton. Its subcellular location is the microtubule organizing center. Its function is as follows. Binds fibroblast growth factor and E-selectin (cell-adhesion lectin on endothelial cells mediating the binding of neutrophils). This is Golgi apparatus protein 1 (GLG1) from Homo sapiens (Human).